A 452-amino-acid chain; its full sequence is Heat shock protein 83 (452 aa).

ATP is bound at residue Arg124. Residues 448-452 carry the TPR repeat-binding motif; it reads MEQVD.

The protein belongs to the heat shock protein 90 family. As to quaternary structure, homodimer.

It localises to the cytoplasm. In terms of biological role, molecular chaperone that promotes the maturation, structural maintenance and proper regulation of specific target proteins involved for instance in cell cycle control and signal transduction. Undergoes a functional cycle that is linked to its ATPase activity. This cycle probably induces conformational changes in the client proteins, thereby causing their activation. Interacts dynamically with various co-chaperones that modulate its substrate recognition, ATPase cycle and chaperone function. The sequence is that of Heat shock protein 83 (HSP83) from Leishmania donovani.